The primary structure comprises 225 residues: Small ribosomal subunit protein uS3 (225 aa).

The 69-residue stretch at 38–106 (IRRFLQKKFK…PIGMNIIEVK (69 aa)) folds into the KH type-2 domain.

This sequence belongs to the universal ribosomal protein uS3 family. As to quaternary structure, part of the 30S ribosomal subunit. Forms a tight complex with proteins S10 and S14.

In terms of biological role, binds the lower part of the 30S subunit head. Binds mRNA in the 70S ribosome, positioning it for translation. This is Small ribosomal subunit protein uS3 from Leptospira biflexa serovar Patoc (strain Patoc 1 / Ames).